We begin with the raw amino-acid sequence, 545 residues long: Glucose-6-phosphate isomerase (545 aa).

The active-site Proton donor is Glu351. Catalysis depends on residues His382 and Lys510.

The protein belongs to the GPI family.

The protein localises to the cytoplasm. The catalysed reaction is alpha-D-glucose 6-phosphate = beta-D-fructose 6-phosphate. It functions in the pathway carbohydrate biosynthesis; gluconeogenesis. It participates in carbohydrate degradation; glycolysis; D-glyceraldehyde 3-phosphate and glycerone phosphate from D-glucose: step 2/4. Its function is as follows. Catalyzes the reversible isomerization of glucose-6-phosphate to fructose-6-phosphate. The chain is Glucose-6-phosphate isomerase from Shewanella oneidensis (strain ATCC 700550 / JCM 31522 / CIP 106686 / LMG 19005 / NCIMB 14063 / MR-1).